A 414-amino-acid chain; its full sequence is Esterase FrsA (414 aa).

This sequence belongs to the FrsA family.

It carries out the reaction a carboxylic ester + H2O = an alcohol + a carboxylate + H(+). Its function is as follows. Catalyzes the hydrolysis of esters. The polypeptide is Esterase FrsA (Citrobacter koseri (strain ATCC BAA-895 / CDC 4225-83 / SGSC4696)).